The chain runs to 679 residues: Kelch-like protein diablo (679 aa).

Residues 1–48 (MGDLPGGGGGAAGGAGAAGGGGGGGNGAAGSSSSGGGASGSGGGGPGS) show a composition bias toward gly residues. A disordered region spans residues 1–84 (MGDLPGGGGG…RLSHTSEKHP (84 aa)). The BTB domain occupies 101 to 168 (CDVVLNVGGR…CYTAHIIVEE (68 aa)). The BACK domain occupies 203-305 (CLGIRAFADT…SPKFLVGTVG (103 aa)). 6 Kelch repeats span residues 352–398 (VLFA…VLND), 400–446 (LYAV…VLDG), 447–493 (FLYA…VLGG), 495–540 (LYAI…VFNN), 542–587 (IYAV…VVNG), and 588–634 (QLYA…VMRA). A disordered region spans residues 643–679 (CDNNSSNNNNNNYNLKHQQQQPQQQQQQQQQQTQQQL). The span at 645–679 (NNSSNNNNNNYNLKHQQQQPQQQQQQQQQQTQQQL) shows a compositional bias: low complexity.

It functions in the pathway protein modification; protein ubiquitination. Functionally, probable substrate-specific adapter of an E3 ubiquitin-protein ligase complex which mediates the ubiquitination and subsequent proteasomal degradation of target proteins. May have a role in synapse differentiation and growth. In Drosophila willistoni (Fruit fly), this protein is Kelch-like protein diablo.